The primary structure comprises 566 residues: OTU domain-containing protein 5 (566 aa).

Disordered stretches follow at residues 1 to 117 (MTIL…GDAL) and 146 to 175 (PGHSKRRRQAPGVGAVGGASPEREEVGAGY). Positions 11–30 (PPDADPANEPPPPGPLPPAP) are enriched in pro residues. Over residues 32–47 (RGGGVGVGGGGTGVGG) the composition is skewed to gly residues. A compositionally biased stretch (pro residues) spans 63-75 (ASPPPQGPLPGPP). A Phosphoserine modification is found at Ser-64. Residues 84-97 (AVPPGAVAGPRPQQ) are compositionally biased toward low complexity. Over residues 105-115 (GPGGPGGGPGD) the composition is skewed to gly residues. Ser-165 carries the phosphoserine modification. Residue Tyr-175 is modified to Phosphotyrosine. Position 177 is a phosphoserine (Ser-177). A Phosphothreonine modification is found at Thr-195. An OTU domain is found at 213–336 (FIIKQMKEDG…NIHYNSVVNP (124 aa)). Residues 218–224 (MKEDGAC) are cys-loop. Residue Asp-221 is part of the active site. Cys-224 functions as the Nucleophile in the catalytic mechanism. A variable-loop region spans residues 273–283 (KRKNNCHGNHI). Ser-323 is modified (phosphoserine). Residues 324–329 (YHRNIH) form a his-loop region. His-329 is an active-site residue. 2 positions are modified to phosphoserine: Ser-332 and Ser-370. A disordered region spans residues 413–497 (ARQVRGPSQP…PGTSSQFSAG (85 aa)). Low complexity-rich tracts occupy residues 425–438 (ASATCSSATAAASS) and 445–457 (SRSPRQRSSASSP). Ser-447 bears the Phosphoserine mark. Thr-502 carries the post-translational modification Phosphothreonine. The residue at position 503 (Ser-503) is a Phosphoserine.

Belongs to the peptidase C85 family. As to quaternary structure, interacts with TRAF3. Phosphorylation at Ser-177 is required for deubiquitinating activity. Phosphorylation at Ser-323, Ser-332 and Ser-503 by MTOR promotes its activity.

Its subcellular location is the nucleus. It catalyses the reaction Thiol-dependent hydrolysis of ester, thioester, amide, peptide and isopeptide bonds formed by the C-terminal Gly of ubiquitin (a 76-residue protein attached to proteins as an intracellular targeting signal).. With respect to regulation, inhibited by N-ethyl-maleimide (NEM). Functionally, deubiquitinating enzyme that functions as a negative regulator of the innate immune system. Has peptidase activity towards 'Lys-48'- and 'Lys-63'-linked polyubiquitin chains. Can also cleave 'Lys-11'-linked ubiquitin chains (in vitro). Acts via TRAF3 deubiquitination and subsequent suppression of type I interferon (IFN) production. Controls neuroectodermal differentiation through cleaving 'Lys-48'-linked ubiquitin chains to counteract degradation of select chromatin regulators such as ARID1A, HDAC2 and HCF1. Acts as a positive regulator of mTORC1 and mTORC2 signaling following phosphorylation by MTOR: acts by mediating deubiquitination of BTRC, leading to its stability. The polypeptide is OTU domain-containing protein 5 (Rattus norvegicus (Rat)).